Consider the following 227-residue polypeptide: Guanylate kinase (227 aa).

Positions 21–199 constitute a Guanylate kinase-like domain; sequence GNLFMVVAPS…ALAELECIVA (179 aa). 28–35 serves as a coordination point for ATP; it reads APSGAGKS.

This sequence belongs to the guanylate kinase family.

It localises to the cytoplasm. The catalysed reaction is GMP + ATP = GDP + ADP. Functionally, essential for recycling GMP and indirectly, cGMP. The chain is Guanylate kinase from Burkholderia thailandensis (strain ATCC 700388 / DSM 13276 / CCUG 48851 / CIP 106301 / E264).